Reading from the N-terminus, the 264-residue chain is Undecaprenyl-diphosphatase (264 aa).

A run of 8 helical transmembrane segments spans residues 7–27 (IVIPIIIGIIQGITEFFPVSS), 45–65 (TKILEIFVQLGSTISVFLFFY), 86–106 (IHVLISILPTMFLGLIFYNKI), 109–129 (LFNPTNVMYALILGGFFLIIA), 145–165 (INLVQSLIIGCFQTLCLYPGF), 186–206 (VNFSFIISIPLIAGASVLDLI), 215–235 (LNIPYLFSGFTISFIISFLLI), and 244–264 (KVSLTFFGIYRFLIAGIIYFI).

The protein belongs to the UppP family.

Its subcellular location is the cell membrane. The catalysed reaction is di-trans,octa-cis-undecaprenyl diphosphate + H2O = di-trans,octa-cis-undecaprenyl phosphate + phosphate + H(+). Its function is as follows. Catalyzes the dephosphorylation of undecaprenyl diphosphate (UPP). Confers resistance to bacitracin. This Buchnera aphidicola subsp. Schizaphis graminum (strain Sg) protein is Undecaprenyl-diphosphatase.